The primary structure comprises 158 residues: Low molecular weight phosphotyrosine protein phosphatase (158 aa).

N-acetylalanine is present on Ala2. Cys13 serves as the catalytic Nucleophile. Residue Arg19 is part of the active site. The Proton donor role is filled by Asp130. A phosphotyrosine mark is found at Tyr132 and Tyr133.

The protein belongs to the low molecular weight phosphotyrosine protein phosphatase family. Interacts with EPHA2; dephosphorylates EPHA2. Interacts with EPHB1. In terms of assembly, interacts with the SH3 domain of SPTAN1. There is no interaction observed for isoform 2. Phosphorylated by LCK. Phosphorylation at Tyr-132 increases its phosphatase activity.

It is found in the cytoplasm. The enzyme catalyses O-phospho-L-tyrosyl-[protein] + H2O = L-tyrosyl-[protein] + phosphate. It carries out the reaction a phosphate monoester + H2O = an alcohol + phosphate. Inhibited by sulfhydryl reagents. In terms of biological role, acts on tyrosine phosphorylated proteins, low-MW aryl phosphates and natural and synthetic acyl phosphates with differences in substrate specificity between isoform 1 and isoform 2. In Rattus norvegicus (Rat), this protein is Low molecular weight phosphotyrosine protein phosphatase.